Here is a 548-residue protein sequence, read N- to C-terminus: Probable malate:quinone oxidoreductase (548 aa).

It belongs to the MQO family. FAD is required as a cofactor.

It carries out the reaction (S)-malate + a quinone = a quinol + oxaloacetate. It participates in carbohydrate metabolism; tricarboxylic acid cycle; oxaloacetate from (S)-malate (quinone route): step 1/1. The chain is Probable malate:quinone oxidoreductase from Escherichia coli O127:H6 (strain E2348/69 / EPEC).